The chain runs to 412 residues: Peptidase T (412 aa).

H79 is a binding site for Zn(2+). The active site involves D81. D142 provides a ligand contact to Zn(2+). Residue E176 is the Proton acceptor of the active site. E177, D199, and H381 together coordinate Zn(2+).

Belongs to the peptidase M20B family. Zn(2+) is required as a cofactor.

It localises to the cytoplasm. The catalysed reaction is Release of the N-terminal residue from a tripeptide.. Cleaves the N-terminal amino acid of tripeptides. This Exiguobacterium sp. (strain ATCC BAA-1283 / AT1b) protein is Peptidase T.